The sequence spans 69 residues: Large ribosomal subunit protein bL32c (69 aa).

The protein belongs to the bacterial ribosomal protein bL32 family.

It is found in the plastid. The protein resides in the chloroplast. The polypeptide is Large ribosomal subunit protein bL32c (Pelargonium hortorum (Common geranium)).